The chain runs to 819 residues: Solute carrier organic anion transporter family member 74D (819 aa).

Positions 1 to 157 (MTKSNGDVEA…GSSAESSSSC (157 aa)) are disordered. Residues 1–174 (MTKSNGDVEA…RWARRFASTH (174 aa)) are Cytoplasmic-facing. Composition is skewed to polar residues over residues 24 to 34 (GHGQLNGNGYH), 43 to 62 (SQAF…NGEV), and 71 to 81 (LYESTPSNNNE). Low complexity-rich tracts occupy residues 91–111 (LKNG…NGHS) and 144–157 (DLNG…SSSC). Residues 175–195 (VFMVVFLLAYILQGMYMTYFV) traverse the membrane as a helical segment. At 196–213 (SVITTIEKLFQIKSKTTG) the chain is on the extracellular side. A helical transmembrane segment spans residues 214 to 234 (ILLSASEMGQICTAMLLTYFA). Over 235-242 (GRGHRPRW) the chain is Cytoplasmic. Residues 243 to 263 (IACGMVLFSIAAFSCALPHFI) form a helical membrane-spanning segment. The Extracellular portion of the chain corresponds to 264-332 (FGEQLMHSSV…LEQASHSKIT (69 aa)). N-linked (GlcNAc...) asparagine glycans are attached at residues N284, N293, and N309. Residues 333–353 (VIVLCIFFGSLLSSGIGQTAV) form a helical membrane-spanning segment. The Cytoplasmic portion of the chain corresponds to 354–373 (ATLGIPYIDDNVGSKQSPMY). Residues 374 to 394 (MAVTIGMRILGPASGFIFGSF) traverse the membrane as a helical segment. Residues 395 to 413 (CTRWYVNFSNPGFDATDPR) lie on the Extracellular side of the membrane. N401 carries N-linked (GlcNAc...) asparagine glycosylation. The helical transmembrane segment at 414–434 (WIGAWWLGPVAIGSLMLLASI) threads the bilayer. At 435–488 (AMFSFPKQLRGKQKPPGQTATPAAPVEPEEKPKLKDFPKTVRRQLSNDILMFRT) the chain is on the cytoplasmic side. Positions 444 to 466 (RGKQKPPGQTATPAAPVEPEEKP) are disordered. The helical transmembrane segment at 489–509 (ASCVFHLLPIAGLYTFLPKYL) threads the bilayer. At 510–522 (ETQFRLATYDANM) the chain is on the extracellular side. A helical transmembrane segment spans residues 523–543 (IAAFCGILVMGIGIVISGLFI). Over 544 to 553 (LKRKPTARGV) the chain is Cytoplasmic. Residues 554-574 (AAWIAFTALVYSAGMIILMFI) form a helical membrane-spanning segment. The Extracellular portion of the chain corresponds to 575–667 (GCSMNDFAGY…NGYCDNNCKN (93 aa)). Positions 593–651 (ALIEPTCSAALNCTCDKENFAPICADGKMYISACHAGCSSSSLRPSDNRTLYSDCACIP) constitute a Kazal-like domain. 3 disulfides stabilise this stretch: C599-C630, C607-C626, and C616-C649. N-linked (GlcNAc...) asparagine glycosylation is present at N604. A glycan (N-linked (GlcNAc...) asparagine) is linked at N640. Residues 668–688 (FIYFILIFAICVFMHSTSEVG) traverse the membrane as a helical segment. Over 689 to 707 (SMLLVMRCTHPKDKAMAMG) the chain is Cytoplasmic. A helical membrane pass occupies residues 708–728 (VIQSAIGLFGNVPCPIIYGAV). The Extracellular portion of the chain corresponds to 729 to 756 (VDSACLIWKSVCGKHGACSLYDADTFRQ). The helical transmembrane segment at 757–777 (YFLGITAGIMFLAFLMDLVVW) threads the bilayer. The Cytoplasmic portion of the chain corresponds to 778-819 (RKAHRIDIAPEDPQEGGPASNGRTLEVSESKQPITPAPDTTV). The interval 787-819 (PEDPQEGGPASNGRTLEVSESKQPITPAPDTTV) is disordered. The span at 807-819 (SKQPITPAPDTTV) shows a compositional bias: polar residues.

It belongs to the organo anion transporter (TC 2.A.60) family.

Its subcellular location is the cell membrane. Its function is as follows. Transporter that mediates the cellular uptake of ecdysteroids, including ecdysone, from the hemolymph. The polypeptide is Solute carrier organic anion transporter family member 74D (Drosophila melanogaster (Fruit fly)).